The sequence spans 78 residues: MAATCQVTGAVPGFGHNISHSHRRTKRRFDPNVQKKTYYVPSLRRNVKLTLSAKGIKVIDARGIESVVKDILARGVKI.

This sequence belongs to the bacterial ribosomal protein bL28 family.

The polypeptide is Large ribosomal subunit protein bL28 (Clavibacter michiganensis subsp. michiganensis (strain NCPPB 382)).